We begin with the raw amino-acid sequence, 334 residues long: Ornithine carbamoyltransferase (334 aa).

Carbamoyl phosphate is bound by residues 57-60 (STRT), Arg-108, and 135-138 (HPTQ). L-ornithine-binding positions include Asn-168, Asp-232, and 236–237 (SM). Residues 274–275 (CL) and Arg-321 contribute to the carbamoyl phosphate site.

The protein belongs to the aspartate/ornithine carbamoyltransferase superfamily. OTCase family.

It is found in the cytoplasm. It carries out the reaction carbamoyl phosphate + L-ornithine = L-citrulline + phosphate + H(+). It participates in amino-acid biosynthesis; L-arginine biosynthesis; L-arginine from L-ornithine and carbamoyl phosphate: step 1/3. Functionally, reversibly catalyzes the transfer of the carbamoyl group from carbamoyl phosphate (CP) to the N(epsilon) atom of ornithine (ORN) to produce L-citrulline. This chain is Ornithine carbamoyltransferase, found in Cutibacterium acnes (strain DSM 16379 / KPA171202) (Propionibacterium acnes).